The following is a 203-amino-acid chain: Holliday junction branch migration complex subunit RuvA (203 aa).

Residues 1–63 are domain I; it reads MIGKLSGKID…EEHIHLYGFL (63 aa). Residues 64-142 form a domain II region; the sequence is TLEEKNFFNL…KISSGSVIIK (79 aa). The tract at residues 143–149 is flexible linker; the sequence is DSLNIKN. A domain III region spans residues 150-203; the sequence is ITPVASNEVIKALVNLGFSRFEAQNAVQGIIIQNPEISIDELIKTALKNRNAGL.

It belongs to the RuvA family. In terms of assembly, homotetramer. Forms an RuvA(8)-RuvB(12)-Holliday junction (HJ) complex. HJ DNA is sandwiched between 2 RuvA tetramers; dsDNA enters through RuvA and exits via RuvB. An RuvB hexamer assembles on each DNA strand where it exits the tetramer. Each RuvB hexamer is contacted by two RuvA subunits (via domain III) on 2 adjacent RuvB subunits; this complex drives branch migration. In the full resolvosome a probable DNA-RuvA(4)-RuvB(12)-RuvC(2) complex forms which resolves the HJ.

The protein localises to the cytoplasm. Functionally, the RuvA-RuvB-RuvC complex processes Holliday junction (HJ) DNA during genetic recombination and DNA repair, while the RuvA-RuvB complex plays an important role in the rescue of blocked DNA replication forks via replication fork reversal (RFR). RuvA specifically binds to HJ cruciform DNA, conferring on it an open structure. The RuvB hexamer acts as an ATP-dependent pump, pulling dsDNA into and through the RuvAB complex. HJ branch migration allows RuvC to scan DNA until it finds its consensus sequence, where it cleaves and resolves the cruciform DNA. The polypeptide is Holliday junction branch migration complex subunit RuvA (Rickettsia felis (strain ATCC VR-1525 / URRWXCal2) (Rickettsia azadi)).